The following is a 258-amino-acid chain: Mitochondrial distribution and morphology protein 12 (258 aa).

The 233-residue stretch at 1–233 (MSFDIHWSNL…WPSWIELDFN (233 aa)) folds into the SMP-LTD domain. The disordered stretch occupies residues 238–258 (EDLQQSKDTPTTANTGTTTTN). Over residues 246-258 (TPTTANTGTTTTN) the composition is skewed to low complexity.

The protein belongs to the MDM12 family. In terms of assembly, component of the ER-mitochondria encounter structure (ERMES) or MDM complex, composed of MMM1, MDM10, MDM12 and MDM34. An MMM1 homodimer associates with one molecule of MDM12 on each side in a pairwise head-to-tail manner, and the SMP-LTD domains of MMM1 and MDM12 generate a continuous hydrophobic tunnel for phospholipid trafficking.

The protein localises to the mitochondrion outer membrane. It localises to the endoplasmic reticulum membrane. Functionally, component of the ERMES/MDM complex, which serves as a molecular tether to connect the endoplasmic reticulum (ER) and mitochondria. Components of this complex are involved in the control of mitochondrial shape and protein biogenesis, and function in nonvesicular lipid trafficking between the ER and mitochondria. MDM12 is required for the interaction of the ER-resident membrane protein MMM1 and the outer mitochondrial membrane-resident beta-barrel protein MDM10. The MDM12-MMM1 subcomplex functions in the major beta-barrel assembly pathway that is responsible for biogenesis of all mitochondrial outer membrane beta-barrel proteins, and acts in a late step after the SAM complex. The MDM10-MDM12-MMM1 subcomplex further acts in the TOM40-specific pathway after the action of the MDM12-MMM1 complex. Essential for establishing and maintaining the structure of mitochondria and maintenance of mtDNA nucleoids. The protein is Mitochondrial distribution and morphology protein 12 of Zygosaccharomyces rouxii (strain ATCC 2623 / CBS 732 / NBRC 1130 / NCYC 568 / NRRL Y-229).